The primary structure comprises 459 residues: Argininosuccinate lyase (459 aa).

The protein belongs to the lyase 1 family. Argininosuccinate lyase subfamily.

The protein resides in the cytoplasm. It carries out the reaction 2-(N(omega)-L-arginino)succinate = fumarate + L-arginine. Its pathway is amino-acid biosynthesis; L-arginine biosynthesis; L-arginine from L-ornithine and carbamoyl phosphate: step 3/3. The chain is Argininosuccinate lyase from Lactococcus lactis subsp. cremoris (strain MG1363).